A 357-amino-acid chain; its full sequence is Tetraacyldisaccharide 4'-kinase (357 aa).

Residue 54–61 participates in ATP binding; sequence TVGGAGKT.

Belongs to the LpxK family.

It catalyses the reaction a lipid A disaccharide + ATP = a lipid IVA + ADP + H(+). Its pathway is glycolipid biosynthesis; lipid IV(A) biosynthesis; lipid IV(A) from (3R)-3-hydroxytetradecanoyl-[acyl-carrier-protein] and UDP-N-acetyl-alpha-D-glucosamine: step 6/6. Functionally, transfers the gamma-phosphate of ATP to the 4'-position of a tetraacyldisaccharide 1-phosphate intermediate (termed DS-1-P) to form tetraacyldisaccharide 1,4'-bis-phosphate (lipid IVA). This Rhizobium leguminosarum bv. trifolii (strain WSM2304) protein is Tetraacyldisaccharide 4'-kinase.